An 810-amino-acid polypeptide reads, in one-letter code: Eukaryotic translation initiation factor 3 subunit C (810 aa).

A compositionally biased stretch (polar residues) spans 1-11; that stretch reads MSRFFATNYNY. The segment at 1-98 is disordered; sequence MSRFFATNYN…DSDESDEEDG (98 aa). Positions 12 to 33 are enriched in low complexity; the sequence is DETSSSSEEDLLSSSEELLSSS. Residues 34 to 58 are compositionally biased toward acidic residues; sequence EEGELSDDSLFNDESESESDFDSDD. Residues 605 to 780 form the PCI domain; that stretch reads YHQHINLDLV…TYIVIEKGDE (176 aa).

Belongs to the eIF-3 subunit C family. In terms of assembly, component of the eukaryotic translation initiation factor 3 (eIF-3) complex.

It is found in the cytoplasm. Functionally, component of the eukaryotic translation initiation factor 3 (eIF-3) complex, which is involved in protein synthesis of a specialized repertoire of mRNAs and, together with other initiation factors, stimulates binding of mRNA and methionyl-tRNAi to the 40S ribosome. The eIF-3 complex specifically targets and initiates translation of a subset of mRNAs involved in cell proliferation. The chain is Eukaryotic translation initiation factor 3 subunit C from Candida glabrata (strain ATCC 2001 / BCRC 20586 / JCM 3761 / NBRC 0622 / NRRL Y-65 / CBS 138) (Yeast).